Here is a 397-residue protein sequence, read N- to C-terminus: Phosphoglycerate kinase (397 aa).

Substrate is bound by residues 21-23, Arg36, 59-62, Arg119, and Arg152; these read DVN and HFGR. ATP-binding positions include Lys202, Glu324, and 354–357; that span reads GGDT.

This sequence belongs to the phosphoglycerate kinase family. As to quaternary structure, monomer.

The protein localises to the cytoplasm. It carries out the reaction (2R)-3-phosphoglycerate + ATP = (2R)-3-phospho-glyceroyl phosphate + ADP. It participates in carbohydrate degradation; glycolysis; pyruvate from D-glyceraldehyde 3-phosphate: step 2/5. This is Phosphoglycerate kinase from Cereibacter sphaeroides (strain ATCC 17025 / ATH 2.4.3) (Rhodobacter sphaeroides).